A 184-amino-acid polypeptide reads, in one-letter code: Ribosome-recycling factor (184 aa).

Belongs to the RRF family.

The protein localises to the cytoplasm. Responsible for the release of ribosomes from messenger RNA at the termination of protein biosynthesis. May increase the efficiency of translation by recycling ribosomes from one round of translation to another. This Aquifex aeolicus (strain VF5) protein is Ribosome-recycling factor.